Consider the following 533-residue polypeptide: Intestinal-type alkaline phosphatase (533 aa).

An N-terminal signal peptide occupies residues 1-19; it reads MQGACVLLLLGLHLQLSLG. D61 serves as a coordination point for Mg(2+). D61 and S111 together coordinate Zn(2+). S111 (phosphoserine intermediate) is an active-site residue. C140 and C202 are joined by a disulfide. S174 is a binding site for Mg(2+). E235 is a Ca(2+) binding site. N-linked (GlcNAc...) asparagine glycosylation is present at N268. Positions 288, 289, and 304 each coordinate Ca(2+). E330 contributes to the Mg(2+) binding site. Zn(2+)-binding residues include D335, H339, D376, and H377. N429 carries N-linked (GlcNAc...) asparagine glycosylation. H451 provides a ligand contact to Zn(2+). The cysteines at positions 486 and 493 are disulfide-linked. Residue D506 is the site of GPI-anchor amidated aspartate attachment. Positions 507-533 are cleaved as a propeptide — removed in mature form; that stretch reads AAHLAASPPPLALLAGAMLLLLAPTLY.

It belongs to the alkaline phosphatase family. As to quaternary structure, homodimer. Requires Mg(2+) as cofactor. Zn(2+) serves as cofactor. Ca(2+) is required as a cofactor.

The protein resides in the cell membrane. It carries out the reaction a phosphate monoester + H2O = an alcohol + phosphate. Its function is as follows. Alkaline phosphatase that can hydrolyze various phosphate compounds. The protein is Intestinal-type alkaline phosphatase (ALPI) of Bos taurus (Bovine).